Here is a 277-residue protein sequence, read N- to C-terminus: Shikimate dehydrogenase (NADP(+)) (277 aa).

Residues 20–22 and threonine 67 each bind shikimate; that span reads SLS. Lysine 71 serves as the catalytic Proton acceptor. Aspartate 83 contributes to the NADP(+) binding site. Residues asparagine 92 and aspartate 107 each contribute to the shikimate site. NADP(+) contacts are provided by residues 131-135 and isoleucine 219; that span reads GAGGV. Tyrosine 221 is a binding site for shikimate. Glycine 242 is an NADP(+) binding site.

It belongs to the shikimate dehydrogenase family. In terms of assembly, homodimer.

It carries out the reaction shikimate + NADP(+) = 3-dehydroshikimate + NADPH + H(+). Its pathway is metabolic intermediate biosynthesis; chorismate biosynthesis; chorismate from D-erythrose 4-phosphate and phosphoenolpyruvate: step 4/7. Involved in the biosynthesis of the chorismate, which leads to the biosynthesis of aromatic amino acids. Catalyzes the reversible NADPH linked reduction of 3-dehydroshikimate (DHSA) to yield shikimate (SA). This Pelobacter propionicus (strain DSM 2379 / NBRC 103807 / OttBd1) protein is Shikimate dehydrogenase (NADP(+)).